Here is a 181-residue protein sequence, read N- to C-terminus: Ion-translocating oxidoreductase complex subunit B (181 aa).

The tract at residues 1–26 is hydrophobic; it reads MLEAVSAVMSLGGMALFAGLGLGYAA. The 4Fe-4S domain occupies 32 to 90; that stretch reads EADPVVEKLEALLPATNCGMCGHPGCGPYAQAITEGEAINLCTPGGKAVMESIAAMLGV. Cysteine 49, cysteine 52, cysteine 57, cysteine 73, cysteine 110, cysteine 113, cysteine 116, cysteine 120, cysteine 140, cysteine 143, cysteine 146, and cysteine 150 together coordinate [4Fe-4S] cluster. 4Fe-4S ferredoxin-type domains lie at 101–130 and 131–160; these read KVAY…GANK and QSHT…MQPV.

Belongs to the 4Fe4S bacterial-type ferredoxin family. RnfB subfamily. The complex is composed of six subunits: RnfA, RnfB, RnfC, RnfD, RnfE and RnfG. The cofactor is [4Fe-4S] cluster.

It localises to the cell inner membrane. In terms of biological role, part of a membrane-bound complex that couples electron transfer with translocation of ions across the membrane. This is Ion-translocating oxidoreductase complex subunit B from Magnetococcus marinus (strain ATCC BAA-1437 / JCM 17883 / MC-1).